Consider the following 132-residue polypeptide: MSLSDPIANFLTSIRNGQLSMNKVVTVSYSYVIHAILQILLSEGYIDGFTEKLRSTNIKFFEVKLKYYNGVPVINRICRVSKPGKRCYCSAKGMPKFYNGLGLYIISTSKGIMSDYNARKSGVGGEILCGVF.

Belongs to the universal ribosomal protein uS8 family. In terms of assembly, part of the 30S ribosomal subunit. Contacts proteins S5 and S12.

One of the primary rRNA binding proteins, it binds directly to 16S rRNA central domain where it helps coordinate assembly of the platform of the 30S subunit. The polypeptide is Small ribosomal subunit protein uS8 (Ehrlichia ruminantium (strain Welgevonden)).